The following is a 218-amino-acid chain: Oxygen regulatory protein NreC (218 aa).

In terms of domain architecture, Response regulatory spans 2-119; that stretch reads KIVIADDHAV…QLILAVRTVY (118 aa). Asp-53 carries the 4-aspartylphosphate modification. The HTH luxR-type domain maps to 149–214; it reads SSDPFKILSK…ELVEYALKKK (66 aa). The H-T-H motif DNA-binding region spans 173-192; the sequence is NKDIAEKLFVSVKTVEAHKT.

In terms of processing, phosphorylated by NreB.

It localises to the cytoplasm. Member of the two-component regulatory system NreB/NreC involved in the control of dissimilatory nitrate/nitrite reduction in response to oxygen. Phosphorylated NreC binds to a GC-rich palindromic sequence at the promoters of the nitrate (narGHJI) and nitrite (nir) reductase operons, as well as the putative nitrate transporter gene narT, and activates their expression. In Staphylococcus epidermidis (strain ATCC 12228 / FDA PCI 1200), this protein is Oxygen regulatory protein NreC (nreC).